Consider the following 348-residue polypeptide: MNGTEGPNFYVPFSNKTGVVRSPFEAPQYYLAEPWQFSMLAAYMFLLIVLGFPINFLTLYVTVQHKKLRTPLNYILLNLAVADLFMVFGGFTTTLYTSLHGYFVFGPTGCNLEGFFATLGGEIALWSLVVLAIERYVVVCKPMSNFRFGENHAIMGVAFTWVMALACAAPPLVGWSRYIPQGMQCSCGALYFTLKPEINNESFVIYMFVVHFSIPLIVIFFCYGQLVFTVKEAAAQQQESATTQKAEKEVTRMVIIMVIAFLICWLPYAGVAFYIFTHQGSDFGPIFMTIPAFFAKSSSVYNPVIYIMMNKQFRNCMLTTLCCGKNPLGDDEASTTVSKTETSQVAPA.

The residue at position 1 (Met-1) is an N-acetylmethionine. At 1-36 (MNGTEGPNFYVPFSNKTGVVRSPFEAPQYYLAEPWQ) the chain is on the extracellular side. 2 N-linked (GlcNAc...) asparagine glycosylation sites follow: Asn-2 and Asn-15. The helical transmembrane segment at 37–61 (FSMLAAYMFLLIVLGFPINFLTLYV) threads the bilayer. Over 62-73 (TVQHKKLRTPLN) the chain is Cytoplasmic. The chain crosses the membrane as a helical span at residues 74–96 (YILLNLAVADLFMVFGGFTTTLY). Residues 97–110 (TSLHGYFVFGPTGC) are Extracellular-facing. A disulfide bond links Cys-110 and Cys-187. The helical transmembrane segment at 111-133 (NLEGFFATLGGEIALWSLVVLAI) threads the bilayer. Positions 134–136 (ERY) match the 'Ionic lock' involved in activated form stabilization motif. Residues 134–152 (ERYVVVCKPMSNFRFGENH) are Cytoplasmic-facing. Residues 153–173 (AIMGVAFTWVMALACAAPPLV) traverse the membrane as a helical segment. The Extracellular segment spans residues 174–202 (GWSRYIPQGMQCSCGALYFTLKPEINNES). Residue Glu-201 participates in Zn(2+) binding. The chain crosses the membrane as a helical span at residues 203 to 224 (FVIYMFVVHFSIPLIVIFFCYG). The Cytoplasmic segment spans residues 225–252 (QLVFTVKEAAAQQQESATTQKAEKEVTR). Residues 253–274 (MVIIMVIAFLICWLPYAGVAFY) form a helical membrane-spanning segment. The Extracellular portion of the chain corresponds to 275–286 (IFTHQGSDFGPI). Residue Gln-279 participates in Zn(2+) binding. Residues 287 to 308 (FMTIPAFFAKSSSVYNPVIYIM) form a helical membrane-spanning segment. Lys-296 is modified (N6-(retinylidene)lysine). Residues 309 to 348 (MNKQFRNCMLTTLCCGKNPLGDDEASTTVSKTETSQVAPA) are Cytoplasmic-facing. Residues Cys-322 and Cys-323 are each lipidated (S-palmitoyl cysteine). Residues 330–348 (DDEASTTVSKTETSQVAPA) are interaction with SAG. Phosphoserine is present on Ser-334. At Ser-334 the chain carries Phosphoserine; by RK and GRK7. Phosphothreonine is present on residues Thr-335 and Thr-336. Residues Thr-335 and Thr-336 each carry the phosphothreonine; by RK and GRK7 modification. At Ser-338 the chain carries Phosphoserine; by RK and GRK7. Phosphothreonine is present on residues Thr-340 and Thr-342. At Ser-343 the chain carries Phosphoserine; by RK and GRK7.

It belongs to the G-protein coupled receptor 1 family. Opsin subfamily. In terms of assembly, homodimer. May form a complex composed of RHO, GRK1 and RCVRN in a Ca(2+)-dependent manner; RCVRN prevents the interaction between GRK1 and RHO. Interacts with GRK1. Interacts (phosphorylated form) with SAG. Interacts with GNAT1. Interacts with GNAT3. SAG and G-proteins compete for a common binding site. Interacts with PRCD; the interaction promotes PRCD stability. Forms a complex with ASAP1 and ARF4. Forms a complex with ASAP1, RAB11A, Rabin8/RAB3IP, ARF4 and RAB11FIP3; the complex regulates Golgi-to-cilia rhodopsin/RHO transport in photoreceptors. Post-translationally, phosphorylated on some or all of the serine and threonine residues present in the C-terminal region. In terms of processing, contains one covalently linked retinal chromophore. Upon light absorption, the covalently bound 11-cis-retinal is converted to all-trans-retinal. After hydrolysis of the Schiff base and release of the covalently bound all-trans-retinal, active rhodopsin is regenerated by binding of a fresh molecule of 11-cis-retinal.

The protein resides in the membrane. It is found in the cell projection. It localises to the cilium. The protein localises to the photoreceptor outer segment. In terms of biological role, photoreceptor required for image-forming vision at low light intensity. Required for photoreceptor cell viability after birth. Light-induced isomerization of 11-cis to all-trans retinal triggers a conformational change that activates signaling via G-proteins. Subsequent receptor phosphorylation mediates displacement of the bound G-protein alpha subunit by the arrestin SAG and terminates signaling. The protein is Rhodopsin (RHO) of Ovis aries (Sheep).